Consider the following 30-residue polypeptide: Beta-endorphin-2 (30 aa).

Position 1 is an N-acetyltyrosine (Tyr-1).

This sequence belongs to the POMC family.

Its subcellular location is the secreted. This Oncorhynchus keta (Chum salmon) protein is Beta-endorphin-2.